The primary structure comprises 610 residues: MKWLKQLQSLHTKLVIVYVLLIIIGMQIIGLYFTNSLEKELLDNFKKNITQYAKQLDVNIEKVYKDKDKGSVNAQKDIQDLLNEYANRQEIGEIRFIDKDQIIMATTKQSNRGLINQKVNDGSVQKALSLGQTNDHMVLKDYGSGKERVWVYNIPVKVDKQTIGDIYIESKINDVYNQLNNINQIFIVGTAISLFITVILGFFIARTITKPITDMRNQTVEMSKGNYTQRVKIYGNDEIGELALAFNNLSKRVQEAQANTESEKRRLDSVITHMSDGILATDRRGRVRIANDMALKMLGLAKEDVIGYYMLGVLNLENEFSLEEIQENSDSFLLDINEEEGIIARVNFSTIVQETGFVTGYIAVLHDVTEQQQVERERREFVANVSHELRTPLTSMNSYIEALEEGAWQDKELAPSFLSVTREETERMIRLVNDLLQLSKMDNESDQITKEIIDFNMFINKIINRHEMAAKDTTFVREIPQQTIFAEIDPDKMTQVFDNVITNAMKYSRGEKRVEFHVKQNALYNRMTIRIKDNGIGIPINKVDKIFDRFYRVDKARTRKMGGTGLGLAISKEIVEAHNGRIWANSVEGQGTSIFITLPCEIIEDGDWDE.

2 consecutive transmembrane segments (helical) span residues 14–34 (LVIVYVLLIIIGMQIIGLYFT) and 185–205 (IFIVGTAISLFITVILGFFIA). Positions 206-258 (RTITKPITDMRNQTVEMSKGNYTQRVKIYGNDEIGELALAFNNLSKRVQEAQA) constitute an HAMP domain. Positions 263-334 (EKRRLDSVIT…IQENSDSFLL (72 aa)) constitute a PAS domain. One can recognise a PAC domain in the interval 327–380 (ENSDSFLLDINEEEGIIARVNFSTIVQETGFVTGYIAVLHDVTEQQQVERERRE). Residues 384–602 (NVSHELRTPL…SIFITLPCEI (219 aa)) enclose the Histidine kinase domain. Phosphohistidine; by autocatalysis is present on histidine 387.

Post-translationally, autophosphorylated.

The protein localises to the cell membrane. It carries out the reaction ATP + protein L-histidine = ADP + protein N-phospho-L-histidine.. Member of the two-component regulatory system WalK/WalR that regulates genes involved in autolysis, biofilm formation and cell wall metabolism. WalK functions as a sensor protein kinase which is autophosphorylated at a histidine residue and transfers its phosphate group to WalR. This Staphylococcus epidermidis (strain ATCC 35984 / DSM 28319 / BCRC 17069 / CCUG 31568 / BM 3577 / RP62A) protein is Sensor protein kinase WalK (walK).